Reading from the N-terminus, the 297-residue chain is Endonuclease G, mitochondrial (297 aa).

Residues 1 to 48 constitute a mitochondrion transit peptide; it reads MRALRAGLTLASGAGLGAVVEGWRRRREDARAAPGLLGRLPVLPVAAA. Thr-128 carries the phosphothreonine; by GSK3-beta modification. Catalysis depends on His-141, which acts as the Proton acceptor. Asn-172 is a Mg(2+) binding site. The segment at 286–296 is essential for deoxyribonuclease activity; the sequence is AGSLKAITAGS. Ser-288 is subject to Phosphoserine; by GSK3-beta.

This sequence belongs to the DNA/RNA non-specific endonuclease family. In terms of assembly, homodimer; disulfide-linked. Homodimerization is essential for enzyme activity. Interacts with YWHAG. It depends on Mg(2+) as a cofactor. GSK3-beta-mediated dual phosphorylations at Thr-128 and Ser-288 is necessary for its interaction with YWHAG and the induction of autophagy.

It localises to the mitochondrion. Functionally, endonuclease that preferentially catalyzes the cleavage of double-stranded 5-hydroxymethylcytosine (5hmC)-modified DNA. The 5hmC-modified nucleotide does not increase the binding affinity, but instead increases the efficiency of cutting and specifies the site of cleavage for the modified DNAs. Shows significantly higher affinity for four-stranded Holliday junction over duplex and single-stranded DNAs. Promotes conservative recombination when the DNA is 5hmC-modified. Promotes autophagy through the suppression of mTOR by its phosphorylation-mediated interaction with YWHAG and its endonuclease activity-mediated DNA damage response. GSK3-beta mediated phosphorylation of ENDOG enhances its interaction with YWHAG, leading to the release of TSC2 and PIK3C3 from YWHAG resulting in mTOR pathway suppression and autophagy initiation. Promotes cleavage of mtDNA in response to oxidative and nitrosative stress, in turn inducing compensatory mtDNA replication. This is Endonuclease G, mitochondrial (ENDOG) from Homo sapiens (Human).